We begin with the raw amino-acid sequence, 111 residues long: MVELKTFLLYAVTALAEIAGCYLPWLWLRQDRSAWLLVPGAACLALFAWLLTLHPAAAGRVYAAYGGVYVAVALGWLWAVDGIRPDRWDLAGAAVTLAGMAIIAFAPRGAA.

The next 4 helical transmembrane spans lie at 7–27 (FLLY…PWLW), 33–53 (SAWL…LLTL), 63–83 (AAYG…VDGI), and 90–110 (LAGA…PRGA).

Belongs to the UPF0060 family.

It localises to the cell inner membrane. The polypeptide is UPF0060 membrane protein Aave_2845 (Paracidovorax citrulli (strain AAC00-1) (Acidovorax citrulli)).